Consider the following 761-residue polypeptide: uncharacterized protein (761 aa).

Met1 bears the N-acetylmethionine mark. Disordered stretches follow at residues Met1–Ser82, Ser229–Ala320, and Phe590–Gln640. The span at Asn13–Leu27 shows a compositional bias: polar residues. Over residues Pro28–Thr45 the composition is skewed to low complexity. 4 stretches are compositionally biased toward polar residues: residues Thr244–Glu259, Asn266–His276, Phe590–Asp604, and Ser627–Gln640.

Post-translationally, phosphorylated by CDC28.

This is an uncharacterized protein from Saccharomyces cerevisiae (strain ATCC 204508 / S288c) (Baker's yeast).